Here is a 498-residue protein sequence, read N- to C-terminus: Probable malate:quinone oxidoreductase 2 (498 aa).

This sequence belongs to the MQO family. The cofactor is FAD.

It carries out the reaction (S)-malate + a quinone = a quinol + oxaloacetate. Its pathway is carbohydrate metabolism; tricarboxylic acid cycle; oxaloacetate from (S)-malate (quinone route): step 1/1. The polypeptide is Probable malate:quinone oxidoreductase 2 (Staphylococcus epidermidis (strain ATCC 35984 / DSM 28319 / BCRC 17069 / CCUG 31568 / BM 3577 / RP62A)).